The sequence spans 519 residues: Importin subunit alpha-5 (519 aa).

The IBB domain occupies 1–58 (MSLRPSTKTEIRRIRYKVSVDAEEGRRRREDFLVEIRKSKRNENLMKKRRVKVLPPDY). ARM repeat units follow at residues 103–143 (SPPT…NIAS), 146–185 (SEHT…NVAG), 188–228 (IQCR…NFFR), 230–269 (KPSP…NLSD), 272–311 (NENI…NIVS), 314–354 (SQQT…NITA), 357–396 (EEQI…NASV), and 400–439 (PNQI…MILI).

It belongs to the importin alpha family. Forms a complex with importin subunit beta-1.

It is found in the nucleus envelope. Binds to conventional NLS motifs and mediates nuclear protein import across the nuclear envelope. The protein is Importin subunit alpha-5 of Arabidopsis thaliana (Mouse-ear cress).